We begin with the raw amino-acid sequence, 504 residues long: Probable GTP-binding protein OBGC2 (504 aa).

The segment covering 24-39 has biased composition (basic and acidic residues); the sequence is AHRDARPALRLPELHA. Disordered stretches follow at residues 24–46 and 93–122; these read AHRD…RRNN and VLAM…GVKK. The 204-residue stretch at 73-276 folds into the Obg domain; the sequence is HKYFDHAVVT…VSLELILRVV (204 aa). A compositionally biased stretch (basic residues) spans 107–122; the sequence is SPRRRSDKGKRSGVKK. In terms of domain architecture, OBG-type G spans 277 to 494; that stretch reads ADVGLVGLPN…MLKEIRAALR (218 aa). Residues 283–290 and 337–341 each bind GTP; these read GLPNAGKS and DLPGL. Residues 436-452 show a composition bias toward polar residues; sequence SEDSLNGNTGEHNTSSE. The disordered stretch occupies residues 436–463; the sequence is SEDSLNGNTGEHNTSSETKVEGGEKELR. Residues 453–463 show a composition bias toward basic and acidic residues; it reads TKVEGGEKELR.

Belongs to the TRAFAC class OBG-HflX-like GTPase superfamily. OBG GTPase family.

Its function is as follows. May bind GTP and have GTPase activity. This chain is Probable GTP-binding protein OBGC2, found in Oryza sativa subsp. japonica (Rice).